Here is a 259-residue protein sequence, read N- to C-terminus: Cytochrome c oxidase subunit 3 (259 aa).

Helical transmembrane passes span 13–33, 36–56, 80–100, 125–145, 154–174, 195–215, and 237–257; these read PWPL…TSWF, HGFI…FQWW, GMVL…WAYF, FQIP…VTWA, HAEA…FTLL, FFVA…FLLI, and AWYW…IYWW.

It belongs to the cytochrome c oxidase subunit 3 family. Component of the cytochrome c oxidase (complex IV, CIV), a multisubunit enzyme composed of a catalytic core of 3 subunits and several supernumerary subunits. The complex exists as a monomer or a dimer and forms supercomplexes (SCs) in the inner mitochondrial membrane with ubiquinol-cytochrome c oxidoreductase (cytochrome b-c1 complex, complex III, CIII).

The protein resides in the mitochondrion inner membrane. It catalyses the reaction 4 Fe(II)-[cytochrome c] + O2 + 8 H(+)(in) = 4 Fe(III)-[cytochrome c] + 2 H2O + 4 H(+)(out). In terms of biological role, component of the cytochrome c oxidase, the last enzyme in the mitochondrial electron transport chain which drives oxidative phosphorylation. The respiratory chain contains 3 multisubunit complexes succinate dehydrogenase (complex II, CII), ubiquinol-cytochrome c oxidoreductase (cytochrome b-c1 complex, complex III, CIII) and cytochrome c oxidase (complex IV, CIV), that cooperate to transfer electrons derived from NADH and succinate to molecular oxygen, creating an electrochemical gradient over the inner membrane that drives transmembrane transport and the ATP synthase. Cytochrome c oxidase is the component of the respiratory chain that catalyzes the reduction of oxygen to water. Electrons originating from reduced cytochrome c in the intermembrane space (IMS) are transferred via the dinuclear copper A center (CU(A)) of subunit 2 and heme A of subunit 1 to the active site in subunit 1, a binuclear center (BNC) formed by heme A3 and copper B (CU(B)). The BNC reduces molecular oxygen to 2 water molecules using 4 electrons from cytochrome c in the IMS and 4 protons from the mitochondrial matrix. In Heterololigo bleekeri (Spear squid), this protein is Cytochrome c oxidase subunit 3 (COIII).